The sequence spans 2006 residues: Supporter of activation of yellow protein (2006 aa).

8 disordered regions span residues 1–208 (MNDL…RRVE), 313–347 (MPAKNDAHLSSLSPASASSSSASSSSSSSSSSSLA), 458–564 (EEKP…AQSQ), 744–794 (DTQD…DPAR), 821–916 (DLEG…KSRR), 929–1029 (VSVG…NNNS), 1044–1082 (CSSSSSTSSGAAANQQVIGGSGSSSMLPPTTILSSSDPL), and 1099–1196 (QQLR…SAVA). Positions 10-60 (VAATSSSGSESGTAVESAAATSTAGSAGAAGRPQSNCSANSNAKSVAASST) are enriched in low complexity. Polar residues predominate over residues 67–81 (VSSTSSPAQRDQQLN). Over residues 118-128 (SPPPTLPPPTT) the composition is skewed to pro residues. Residues 129–168 (PCDDAPSTTGASASASSASGEAPSAASAAGAAGGPMAATA) are compositionally biased toward low complexity. A compositionally biased stretch (polar residues) spans 189-199 (ANPNSNANESQ). Over residues 321–347 (LSSLSPASASSSSASSSSSSSSSSSLA) the composition is skewed to low complexity. Positions 485-494 (GGESNSSSQE) are enriched in polar residues. A compositionally biased stretch (basic and acidic residues) spans 525-534 (SLSKEHDPKI). Over residues 543 to 563 (ASNGIASGGSKASKASKSAQS) the composition is skewed to low complexity. Residues 744–758 (DTQDNNNENHLKRTN) show a composition bias toward basic and acidic residues. Composition is skewed to polar residues over residues 759-769 (SEGNESPSSRL) and 828-844 (PPTQQQSISTPDQNGAL). Positions 861-870 (PATPQPPPVA) are enriched in pro residues. Composition is skewed to basic and acidic residues over residues 936–945 (ADMKAKEKES) and 963–972 (ESPKTRDHRP). 2 stretches are compositionally biased toward low complexity: residues 978-990 (RTTTSTNTNLQPT) and 1018-1029 (SSESESNNNNNS). Over residues 1053 to 1080 (GAAANQQVIGGSGSSSMLPPTTILSSSD) the composition is skewed to polar residues. Residues 1103–1112 (SSRPSSISCG) are compositionally biased toward low complexity. The span at 1147-1158 (GRGRGRRSRGGR) shows a compositional bias: basic residues. Positions 1161-1173 (GSSSVDRAVSVGG) are enriched in low complexity. The SAY stretch occupies residues 1340–1573 (MIQEQVALYL…PPTDLMAQLL (234 aa)). The disordered stretch occupies residues 1579–1685 (AVGSDEIKTS…AGSEDEDGNE (107 aa)). Low complexity-rich tracts occupy residues 1627 to 1652 (TASSSSTSSAQSVSSASSGNGSSSDT) and 1660 to 1677 (FSSTSSCSSSTGASSGAG). The PHD-type 1; degenerate zinc finger occupies 1694–1751 (TCGVCLRSQHRNARDMPEAFIRCYTCRKRVHPSCVDMPPRMVGRVRNYNWQCAGCKCC). The PHD-type 2; degenerate zinc-finger motif lies at 1753–1796 (KCRSSQRPGKMLYCEQCDRGYHIYCLGLRTVPDGRWSCERCCFC). Residues 1887–1911 (TSAQTDDSPMPSPGLTTNGGRALSP) form a disordered region.

The protein belongs to the SAYP family. Widely expressed. Highly expressed in ovary. Expressed in nursing cells and growing oocytes at all stages of development and accumulates in mature oocytes. Expressed in the nuclei of syncytium blastoderm of early embryos and in the nuclei of different tissues of late embryos, larvae, and adults.

It localises to the nucleus. Its subcellular location is the cytoplasm. The protein resides in the chromosome. Its function is as follows. Essential transcription regulator during early development. Coactivates transcription of some euchromatin genes and repress transcription in of euchromatin genes translocated to heterochromatin. The chain is Supporter of activation of yellow protein (e(y)3) from Drosophila melanogaster (Fruit fly).